The sequence spans 179 residues: Plasmid-derived single-stranded DNA-binding protein (179 aa).

Positions 6–110 constitute an SSB domain; that stretch reads INKVILVGRL…ILVKTTGTMQ (105 aa). The DNA-binding element occupies 55–61; sequence WHRVVLF. Residues 117–179 are disordered; the sequence is GAQTQPEEGQ…DYGFSDDIPF (63 aa). Polar residues predominate over residues 118–132; the sequence is AQTQPEEGQQFSGQP. Over residues 145–155 the composition is skewed to basic residues; the sequence is GGAKTKGRGRK. Positions 167 to 179 are enriched in acidic residues; it reads EGDDYGFSDDIPF.

Homotetramer.

Functionally, may contribute to the conjugative processing of DNA. It has a functional relationship with Psi (plasmid-mediated sos inhibition) proteins. The polypeptide is Plasmid-derived single-stranded DNA-binding protein (ssbF) (Escherichia coli (strain K12)).